We begin with the raw amino-acid sequence, 88 residues long: Small ribosomal subunit protein uS15 (88 aa).

A compositionally biased stretch (polar residues) spans 1 to 20 (MLTTQDKQNIIKENQQSEGD). Residues 1-24 (MLTTQDKQNIIKENQQSEGDTGSP) form a disordered region.

The protein belongs to the universal ribosomal protein uS15 family. As to quaternary structure, part of the 30S ribosomal subunit. Forms a bridge to the 50S subunit in the 70S ribosome, contacting the 23S rRNA.

One of the primary rRNA binding proteins, it binds directly to 16S rRNA where it helps nucleate assembly of the platform of the 30S subunit by binding and bridging several RNA helices of the 16S rRNA. In terms of biological role, forms an intersubunit bridge (bridge B4) with the 23S rRNA of the 50S subunit in the ribosome. The polypeptide is Small ribosomal subunit protein uS15 (Francisella philomiragia subsp. philomiragia (strain ATCC 25017 / CCUG 19701 / FSC 153 / O#319-036)).